The chain runs to 67 residues: uncharacterized protein (67 aa).

This is an uncharacterized protein from Caenorhabditis elegans.